Consider the following 576-residue polypeptide: Arginine--tRNA ligase (576 aa).

Residues 128–136 carry the 'HIGH' region motif; the sequence is PTGPMHIGH.

Belongs to the class-I aminoacyl-tRNA synthetase family. Monomer.

It localises to the cytoplasm. The catalysed reaction is tRNA(Arg) + L-arginine + ATP = L-arginyl-tRNA(Arg) + AMP + diphosphate. The protein is Arginine--tRNA ligase of Rickettsia conorii (strain ATCC VR-613 / Malish 7).